Here is a 1093-residue protein sequence, read N- to C-terminus: Probable cellulose synthase A catalytic subunit 3 [UDP-forming] (1093 aa).

The Cytoplasmic segment spans residues 1–280 (MEASAGLVAG…PSSQINPYRM (280 aa)). Residues C39, C42, C58, C61, C66, C69, C81, and C84 each coordinate Zn(2+). An RING-type; degenerate zinc finger spans residues 39–85 (CQICGDDVGLNPDGEPFVACNECAFPVCRDCYEYERREGTQNCPQCK). Residues 233–246 (LHQMRNDGGGKDWD) show a composition bias toward basic and acidic residues. Positions 233 to 257 (LHQMRNDGGGKDWDGDGDDGDLPLM) are disordered. Residues 281-301 (VIIIRLVVLGFFFHYRVMHPV) traverse the membrane as a helical segment. Residues 302–303 (PD) lie on the Extracellular side of the membrane. The chain crosses the membrane as a helical span at residues 304-324 (AFALWLISVICEIWFAMSWIL). Over 325–869 (DQFPKWFPIE…CLERFSYINS (545 aa)) the chain is Cytoplasmic. UDP-alpha-D-glucose-binding residues include S363, K369, E370, and D399. Residue D399 is part of the active site. Residues 453-480 (VRERRAMKREYEEFKVRINALVAKAQKV) are a coiled coil. UDP-alpha-D-glucose is bound at residue K540. 2 residues coordinate Mn(2+): K541 and D565. The active site involves D793. A helical membrane pass occupies residues 870 to 890 (IVYPFTSIPLLAYCTLPAICL). Topologically, residues 891–902 (LTGKFITPELTN) are extracellular. A helical transmembrane segment spans residues 903–923 (VASLWFMSLFICIFATGILEM). The Cytoplasmic segment spans residues 924–939 (RWSGVGIDDWWRNEQF). Residues 940-960 (WVIGGVSSHLFALFQGLLKVI) form a helical membrane-spanning segment. Topologically, residues 961–988 (AGIDTSFTVTSKGGDDEEFSELYTFKWT) are extracellular. The chain crosses the membrane as a helical span at residues 989–1009 (TLLIPPTTLLLLNFIGVVAGV). The Cytoplasmic portion of the chain corresponds to 1010–1020 (SNAINNGYESW). Residues 1021-1041 (GPLFGKLFFAFWVIVHLYPFL) form a helical membrane-spanning segment. Residues 1042–1050 (KGLVGRQNR) lie on the Extracellular side of the membrane. The helical transmembrane segment at 1051–1071 (TPTIVIVWSILLASIFSLLWV) threads the bilayer. The Cytoplasmic portion of the chain corresponds to 1072 to 1093 (RIDPFLAKNDGPLLEECGLDCN).

This sequence belongs to the glycosyltransferase 2 family. Plant cellulose synthase subfamily. It depends on Mn(2+) as a cofactor. The cofactor is Zn(2+).

It is found in the cell membrane. The catalysed reaction is [(1-&gt;4)-beta-D-glucosyl](n) + UDP-alpha-D-glucose = [(1-&gt;4)-beta-D-glucosyl](n+1) + UDP + H(+). It functions in the pathway glycan metabolism; plant cellulose biosynthesis. Its function is as follows. Probable catalytic subunit of cellulose synthase terminal complexes ('rosettes'), required for beta-1,4-glucan microfibril crystallization, a major mechanism of the cell wall formation. This Oryza sativa subsp. japonica (Rice) protein is Probable cellulose synthase A catalytic subunit 3 [UDP-forming] (CESA3).